A 109-amino-acid chain; its full sequence is uncharacterized protein (109 aa).

The N-terminal stretch at 1-22 (MKRHSTLFLFTLLTLTTVPAQA) is a signal peptide. Positions 36 to 109 (INDASNPDRG…ERRMEDEYGQ (74 aa)) are disordered. Residues 41–109 (NPDRGRDYED…ERRMEDEYGQ (69 aa)) are compositionally biased toward basic and acidic residues.

This is an uncharacterized protein from Escherichia coli O157:H7.